Consider the following 160-residue polypeptide: Cytochrome b6-f complex subunit 4 (160 aa).

A run of 3 helical transmembrane segments spans residues 36-56 (LLYMFPVCILGTIACNVGLAV), 95-115 (LLGVLLMASVPVGLITVPFIE), and 131-151 (TIFLIGTVVAVWLGIGATLPI).

It belongs to the cytochrome b family. PetD subfamily. The 4 large subunits of the cytochrome b6-f complex are cytochrome b6, subunit IV (17 kDa polypeptide, petD), cytochrome f and the Rieske protein, while the 4 small subunits are petG, petL, petM and petN. The complex functions as a dimer.

It localises to the plastid. The protein resides in the chloroplast thylakoid membrane. Functionally, component of the cytochrome b6-f complex, which mediates electron transfer between photosystem II (PSII) and photosystem I (PSI), cyclic electron flow around PSI, and state transitions. In Staurastrum punctulatum (Green alga), this protein is Cytochrome b6-f complex subunit 4.